An 89-amino-acid polypeptide reads, in one-letter code: Small ribosomal subunit protein uS15 (89 aa).

This sequence belongs to the universal ribosomal protein uS15 family. In terms of assembly, part of the 30S ribosomal subunit. Forms a bridge to the 50S subunit in the 70S ribosome, contacting the 23S rRNA.

One of the primary rRNA binding proteins, it binds directly to 16S rRNA where it helps nucleate assembly of the platform of the 30S subunit by binding and bridging several RNA helices of the 16S rRNA. Functionally, forms an intersubunit bridge (bridge B4) with the 23S rRNA of the 50S subunit in the ribosome. The protein is Small ribosomal subunit protein uS15 of Maridesulfovibrio salexigens (strain ATCC 14822 / DSM 2638 / NCIMB 8403 / VKM B-1763) (Desulfovibrio salexigens).